A 232-amino-acid polypeptide reads, in one-letter code: Large ribosomal subunit protein uL1 (232 aa).

Belongs to the universal ribosomal protein uL1 family. Part of the 50S ribosomal subunit.

Functionally, binds directly to 23S rRNA. The L1 stalk is quite mobile in the ribosome, and is involved in E site tRNA release. Its function is as follows. Protein L1 is also a translational repressor protein, it controls the translation of the L11 operon by binding to its mRNA. The chain is Large ribosomal subunit protein uL1 from Maricaulis maris (strain MCS10) (Caulobacter maris).